The primary structure comprises 129 residues: MPTINQLIRKERKKVIRKTKSPALLECPQRRGVCTRVYTTTPKKPNSALRKVAKVKLTSKVEVISYIPGEGHNLQEHSIVLVRGGRVKDLPGVKYHIIRGALDTAGVAKRNVSRSKYGAKKAKAGGDKK.

Position 89 is a 3-methylthioaspartic acid (aspartate 89).

Belongs to the universal ribosomal protein uS12 family. In terms of assembly, part of the 30S ribosomal subunit. Contacts proteins S8 and S17. May interact with IF1 in the 30S initiation complex.

Functionally, with S4 and S5 plays an important role in translational accuracy. Interacts with and stabilizes bases of the 16S rRNA that are involved in tRNA selection in the A site and with the mRNA backbone. Located at the interface of the 30S and 50S subunits, it traverses the body of the 30S subunit contacting proteins on the other side and probably holding the rRNA structure together. The combined cluster of proteins S8, S12 and S17 appears to hold together the shoulder and platform of the 30S subunit. In Helicobacter hepaticus (strain ATCC 51449 / 3B1), this protein is Small ribosomal subunit protein uS12.